The chain runs to 363 residues: NAD(P)H-quinone oxidoreductase subunit 1, chloroplastic (363 aa).

The next 8 membrane-spanning stretches (helical) occupy residues 30–50, 98–118, 127–147, 165–185, 203–223, 248–268, 300–320, and 336–356; these read LFPI…IVWL, FSIG…VIPF, LSIG…GLLM, AAQS…ISLL, FWGW…ISSL, YSGI…LVSS, VFGT…FLFI, and LLNL…LLTT.

It belongs to the complex I subunit 1 family. NDH is composed of at least 16 different subunits, 5 of which are encoded in the nucleus.

Its subcellular location is the plastid. It localises to the chloroplast thylakoid membrane. It catalyses the reaction a plastoquinone + NADH + (n+1) H(+)(in) = a plastoquinol + NAD(+) + n H(+)(out). It carries out the reaction a plastoquinone + NADPH + (n+1) H(+)(in) = a plastoquinol + NADP(+) + n H(+)(out). In terms of biological role, NDH shuttles electrons from NAD(P)H:plastoquinone, via FMN and iron-sulfur (Fe-S) centers, to quinones in the photosynthetic chain and possibly in a chloroplast respiratory chain. The immediate electron acceptor for the enzyme in this species is believed to be plastoquinone. Couples the redox reaction to proton translocation, and thus conserves the redox energy in a proton gradient. The polypeptide is NAD(P)H-quinone oxidoreductase subunit 1, chloroplastic (Nicotiana tomentosiformis (Tobacco)).